A 216-amino-acid polypeptide reads, in one-letter code: 2-phospho-L-lactate guanylyltransferase (216 aa).

Belongs to the CofC family. As to quaternary structure, homodimer.

The catalysed reaction is (2S)-2-phospholactate + GTP + H(+) = (2S)-lactyl-2-diphospho-5'-guanosine + diphosphate. It functions in the pathway cofactor biosynthesis; coenzyme F420 biosynthesis. Guanylyltransferase that catalyzes the activation of (2S)-2-phospholactate (2-PL) as (2S)-lactyl-2-diphospho-5'-guanosine, via the condensation of 2-PL with GTP. It is involved in the biosynthesis of coenzyme F420, a hydride carrier cofactor. The polypeptide is 2-phospho-L-lactate guanylyltransferase (Methanocaldococcus infernus (strain DSM 11812 / JCM 15783 / ME)).